The following is a 526-amino-acid chain: Dye-decolorizing peroxidase (526 aa).

Residues 1–21 form the signal peptide; sequence MRKSISTFILLSVLSVGQLVA. The propeptide occupies 22–63; the sequence is ARPRSTNAPPRRRTPQPRRTTSLFINPPALPDLPTVQAVDKL. Asparagine 186 carries N-linked (GlcNAc...) asparagine glycosylation. Catalysis depends on aspartate 231, which acts as the Proton acceptor. A glycan (N-linked (GlcNAc...) asparagine) is linked at asparagine 367. Histidine 376 lines the heme pocket. N-linked (GlcNAc...) asparagine glycosylation is found at asparagine 473 and asparagine 484.

This sequence belongs to the DyP-type peroxidase family. The cofactor is heme b.

It is found in the secreted. It catalyses the reaction Reactive Blue 5 + 2 H2O2 = 2,2'-disulfonyl azobenzene + 3-[(4-amino-6-chloro-1,3,5-triazin-2-yl)amino]benzenesulfonate + phthalate + 2 H2O + 2 H(+). It carries out the reaction 2 a phenolic donor + H2O2 = 2 a phenolic radical donor + 2 H2O. Its function is as follows. Manganese-independent peroxidase that is able to convert a large number of compounds, but its physiological substrate is not known. In addition to classic peroxidase substrates (e.g. 2,6-dimethoxyphenol), oxidizes dyes such as Reactive Blue 5 and Reactive Black 5. The polypeptide is Dye-decolorizing peroxidase (Mycena epipterygia (Yellow-stemmed mycena)).